The chain runs to 61 residues: MDPNCSCATGGSCSCASSCKCKECKCTSCKKSCCSCCPMGCAKCAQGCVCKGASEKCSCCA.

Residues 1–29 (MDPNCSCATGGSCSCASSCKCKECKCTSC) form a beta region. A divalent metal cation-binding residues include C5, C7, C13, C15, C19, C21, C24, C26, C29, C33, C34, C36, C37, C41, C44, C48, C50, C57, C59, and C60. The alpha stretch occupies residues 30–61 (KKSCCSCCPMGCAKCAQGCVCKGASEKCSCCA).

This sequence belongs to the metallothionein superfamily. Type 1 family. As to quaternary structure, monomer. Expressed in reticulocytes.

Its function is as follows. Metallothioneins have a high content of cysteine residues that bind various heavy metals; these proteins are transcriptionally regulated by both heavy metals and glucocorticoids. The sequence is that of Metallothionein-1L (MT1L) from Homo sapiens (Human).